The following is a 210-amino-acid chain: High mobility group protein B2 (210 aa).

Lysine 3 carries the post-translational modification N6-acetyllysine. Positions 9 to 79 form a DNA-binding region, HMG box 1; it reads PRGKMSSYAF…RYDREMKNYV (71 aa). Cysteine 23 carries the cysteine sulfonic acid (-SO3H); alternate modification. A disulfide bridge links cysteine 23 with cysteine 45. Lysine 30 carries the post-translational modification N6-acetyllysine. Residue serine 35 is modified to Phosphoserine. Lysine 43 bears the N6-acetyllysine mark. Residue cysteine 45 is modified to Cysteine sulfonic acid (-SO3H); alternate. Basic and acidic residues predominate over residues 51–76; it reads TMSAKEKSKFEDLAKSDKARYDREMK. Residues 51 to 102 are disordered; the sequence is TMSAKEKSKFEDLAKSDKARYDREMKNYVPPKGDKKGKKKDPNAPKRPPSAF. Lysine 90 is modified (N6-acetyllysine). The HMG box 2 DNA-binding region spans 95-163; that stretch reads PKRPPSAFFL…KYEKDIAAYR (69 aa). Phosphoserine is present on serine 100. Cysteine 106 is subject to Cysteine sulfonic acid (-SO3H). N6-acetyllysine is present on residues lysine 114 and lysine 141. Basic and acidic residues predominate over residues 162 to 172; that stretch reads YRAKGKSEVGK. A disordered region spans residues 162–210; it reads YRAKGKSEVGKKGPGRPTGSKKKNEPEDEEEEEEEEDDEDEEEEDEDEE. The required for chemotactic activity stretch occupies residues 165–180; sequence KGKSEVGKKGPGRPTG. Positions 187-210 are enriched in acidic residues; it reads PEDEEEEEEEEDDEDEEEEDEDEE.

It belongs to the HMGB family. As to quaternary structure, interacts with POU2F2, POU2F1 and POU3F1. Component of the RAG complex composed of core components RAG1 and RAG2, and associated component HMGB1 or HMGB2. Component of the SET complex, composed of at least ANP32A, APEX1, HMGB2, NME1, SET and TREX1. Directly interacts with SET. Interacts with LEF1. Post-translationally, reduction/oxidation of cysteine residues Cys-23, Cys-45 and Cys-106 and a possible intramolecular disulfide bond involving Cys-23 and Cys-45 give rise to different redox forms with specific functional activities in various cellular compartments: 1- fully reduced HMGB2 (HMGB2C23hC45hC106h), 2- disulfide HMGB2 (HMGB2C23-C45C106h) and 3- sulfonyl HMGB2 (HMGB2C23soC45soC106so).

It localises to the nucleus. Its subcellular location is the chromosome. The protein localises to the cytoplasm. It is found in the secreted. In terms of biological role, multifunctional protein with various roles in different cellular compartments. May act in a redox sensitive manner. In the nucleus is an abundant chromatin-associated non-histone protein involved in transcription, chromatin remodeling and V(D)J recombination and probably other processes. Binds DNA with a preference to non-canonical DNA structures such as single-stranded DNA. Can bent DNA and enhance DNA flexibility by looping thus providing a mechanism to promote activities on various gene promoters by enhancing transcription factor binding and/or bringing distant regulatory sequences into close proximity. Involved in V(D)J recombination by acting as a cofactor of the RAG complex: acts by stimulating cleavage and RAG protein binding at the 23 bp spacer of conserved recombination signal sequences (RSS). Proposed to be involved in the innate immune response to nucleic acids by acting as a cytoplasmic promiscuous immunogenic DNA/RNA sensor which cooperates with subsequent discriminative sensing by specific pattern recognition receptors. In the extracellular compartment acts as a chemokine. Promotes proliferation and migration of endothelial cells implicating AGER/RAGE. Has antimicrobial activity in gastrointestinal epithelial tissues. Involved in inflammatory response to antigenic stimulus coupled with pro-inflammatory activity. May play a role in germ cell differentiation. Involved in modulation of neurogenesis probably by regulation of neural stem proliferation. Involved in articular cartilage surface maintenance implicating LEF1 and the Wnt/beta-catenin pathway. In Rattus norvegicus (Rat), this protein is High mobility group protein B2 (Hmgb2).